A 430-amino-acid chain; its full sequence is Histidine--tRNA ligase (430 aa).

This sequence belongs to the class-II aminoacyl-tRNA synthetase family. Homodimer.

It is found in the cytoplasm. It catalyses the reaction tRNA(His) + L-histidine + ATP = L-histidyl-tRNA(His) + AMP + diphosphate + H(+). The protein is Histidine--tRNA ligase of Chlorobium limicola (strain DSM 245 / NBRC 103803 / 6330).